Consider the following 624-residue polypeptide: Kelch-like protein diablo (624 aa).

The segment covering 1–21 (MGDPLLPGSTGLGSGPAAAAT) has biased composition (low complexity). Residues 1 to 55 (MGDPLLPGSTGLGSGPAAAATGGSGTTGTGLGSGGTSGAERPPSPARLTHTSEKH) are disordered. A compositionally biased stretch (gly residues) spans 22–37 (GGSGTTGTGLGSGGTS). One can recognise a BTB domain in the interval 73–140 (CDVVLNVGGR…CYTAHIIVEE (68 aa)). Residues 175 to 277 (CLGIRAFADT…SPKFLVGTVG (103 aa)) enclose the BACK domain. 6 Kelch repeats span residues 324 to 370 (VLFA…VLND), 372 to 418 (LYAV…VLDG), 419 to 465 (FLYA…VLSG), 467 to 512 (LYAI…VFNN), 514 to 559 (IYAV…VVNG), and 560 to 606 (QLYA…VMRA).

It functions in the pathway protein modification; protein ubiquitination. In terms of biological role, probable substrate-specific adapter of an E3 ubiquitin-protein ligase complex which mediates the ubiquitination and subsequent proteasomal degradation of target proteins. May have a role in synapse differentiation and growth. The chain is Kelch-like protein diablo from Drosophila virilis (Fruit fly).